We begin with the raw amino-acid sequence, 338 residues long: GTPase Obg (338 aa).

The region spanning 1-159 (MKFLDKAIIH…RILRLELILI (159 aa)) is the Obg domain. An OBG-type G domain is found at 160–333 (AHVGTLGLPN…IVKKIYDFLK (174 aa)). GTP contacts are provided by residues 166–173 (GLPNSGKS), 191–195 (FTTLK), 213–216 (DIPG), 283–286 (NKID), and 314–316 (SAI). Mg(2+) contacts are provided by Ser-173 and Thr-193.

The protein belongs to the TRAFAC class OBG-HflX-like GTPase superfamily. OBG GTPase family. As to quaternary structure, monomer. Mg(2+) serves as cofactor.

The protein localises to the cytoplasm. Functionally, an essential GTPase which binds GTP, GDP and possibly (p)ppGpp with moderate affinity, with high nucleotide exchange rates and a fairly low GTP hydrolysis rate. Plays a role in control of the cell cycle, stress response, ribosome biogenesis and in those bacteria that undergo differentiation, in morphogenesis control. This chain is GTPase Obg, found in Buchnera aphidicola subsp. Baizongia pistaciae (strain Bp).